The chain runs to 201 residues: Protocatechuate 3,4-dioxygenase alpha chain (201 aa).

Arg134 is a binding site for 3,4-dihydroxybenzoate.

This sequence belongs to the intradiol ring-cleavage dioxygenase family. The enzyme is an oligomer of 12 copies of the alpha and beta chains. Requires Fe(3+) as cofactor.

The catalysed reaction is 3,4-dihydroxybenzoate + O2 = 3-carboxy-cis,cis-muconate + 2 H(+). It functions in the pathway aromatic compound metabolism; beta-ketoadipate pathway; 3-carboxy-cis,cis-muconate from 3,4-dihydroxybenzoate: step 1/1. In terms of biological role, plays an essential role in the utilization of numerous aromatic and hydroaromatic compounds via the beta-ketoadipate pathway. In Pseudomonas putida (Arthrobacter siderocapsulatus), this protein is Protocatechuate 3,4-dioxygenase alpha chain (pcaG).